Here is a 687-residue protein sequence, read N- to C-terminus: Glycine--tRNA ligase beta subunit (687 aa).

The protein belongs to the class-II aminoacyl-tRNA synthetase family. In terms of assembly, tetramer of two alpha and two beta subunits.

It localises to the cytoplasm. It catalyses the reaction tRNA(Gly) + glycine + ATP = glycyl-tRNA(Gly) + AMP + diphosphate. The chain is Glycine--tRNA ligase beta subunit from Lactobacillus helveticus (strain DPC 4571).